We begin with the raw amino-acid sequence, 144 residues long: Putative pre-16S rRNA nuclease (144 aa).

The protein belongs to the YqgF nuclease family.

It localises to the cytoplasm. Its function is as follows. Could be a nuclease involved in processing of the 5'-end of pre-16S rRNA. This is Putative pre-16S rRNA nuclease from Blochmanniella pennsylvanica (strain BPEN).